A 232-amino-acid chain; its full sequence is MAKMGKKYSESIKLIDKNSLYTPSEAIDLTLKTAKAKFDETIELSIRLGVDPRHADQQVRGAVVLPHGTGKKVRVLVFAKGDKAKEAEAAGADYVGAEEYLDKIQKENWFDFDVVVATPDMMGVVGRLGRVLGPKGLMPNPKSGTVTFDVAKAIADIKAGKVEYRLDKTAIIHVPIGKKSFGEEKLAENYNVLMEAIVKAKPAAAKGQYIKSLSISSTMGPGVKINPAKVLA.

This sequence belongs to the universal ribosomal protein uL1 family. In terms of assembly, part of the 50S ribosomal subunit.

Binds directly to 23S rRNA. The L1 stalk is quite mobile in the ribosome, and is involved in E site tRNA release. In terms of biological role, protein L1 is also a translational repressor protein, it controls the translation of the L11 operon by binding to its mRNA. The protein is Large ribosomal subunit protein uL1 of Clostridium novyi (strain NT).